Consider the following 633-residue polypeptide: Extracellular metalloproteinase mep (633 aa).

Positions 1–18 (MRLLSLAGAMALPLCVLA) are cleaved as a signal peptide. Positions 19-244 (HPTHRTRGIA…IHGVVDYISD (226 aa)) are excised as a propeptide. Residue Asn326 is glycosylated (N-linked (GlcNAc...) asparagine). Residue His428 coordinates Zn(2+). Residue Glu429 is part of the active site. Residue His432 coordinates Zn(2+). The N-linked (GlcNAc...) asparagine glycan is linked to Asn514.

This sequence belongs to the peptidase M36 family. Zn(2+) serves as cofactor.

The protein resides in the secreted. Secreted metalloproteinase that allows assimilation of proteinaceous substrates. The protein is Extracellular metalloproteinase mep (mep) of Aspergillus terreus (strain NIH 2624 / FGSC A1156).